Reading from the N-terminus, the 335-residue chain is Mitochondrial carrier protein CoAc2 (335 aa).

The next 6 helical transmembrane spans lie at 12–32, 75–95, 119–139, 187–207, 225–242, and 280–302; these read SGPG…AGGV, FYRG…LHYM, LVAG…LDLV, GMAP…YFYE, LGCG…TYPL, and LFSG…FTVY. Solcar repeat units lie at residues 17 to 103, 113 to 212, and 219 to 308; these read PLAV…YRRW, QGPV…MKSH, and KGII…MKVC.

It belongs to the mitochondrial carrier (TC 2.A.29) family. In terms of tissue distribution, expressed throughout the plant.

It is found in the mitochondrion inner membrane. In terms of biological role, required for the accumulation of coenzyme A in the mitochondrial matrix. The chain is Mitochondrial carrier protein CoAc2 from Zea mays (Maize).